A 197-amino-acid chain; its full sequence is Probable GTP-binding protein EngB (197 aa).

The EngB-type G domain maps to 22-197; the sequence is TGVEVAFAGR…LKEKLDIWYQ (176 aa). Residues 30–37, 57–61, 75–78, 142–145, and 177–179 contribute to the GTP site; these read GRSNAGKS, GRTQL, DLPG, TKAD, and FSS. Mg(2+) contacts are provided by Ser-37 and Thr-59.

It belongs to the TRAFAC class TrmE-Era-EngA-EngB-Septin-like GTPase superfamily. EngB GTPase family. Mg(2+) serves as cofactor.

In terms of biological role, necessary for normal cell division and for the maintenance of normal septation. This is Probable GTP-binding protein EngB from Francisella philomiragia subsp. philomiragia (strain ATCC 25017 / CCUG 19701 / FSC 153 / O#319-036).